The chain runs to 54 residues: Large ribosomal subunit protein bL33A (54 aa).

The protein belongs to the bacterial ribosomal protein bL33 family.

The sequence is that of Large ribosomal subunit protein bL33A from Mycobacterium marinum (strain ATCC BAA-535 / M).